A 69-amino-acid chain; its full sequence is Protein hunchback (69 aa).

3 C2H2-type zinc fingers span residues 1–11, 17–39, and 45–69; these read KHHLEYHLRNH, FKCE…LKSH, and YRCA…KYSH.

Belongs to the hunchback C2H2-type zinc-finger protein family.

It is found in the nucleus. Its function is as follows. Gap class segmentation protein that controls development of head structures. The polypeptide is Protein hunchback (hb) (Apis mellifera (Honeybee)).